We begin with the raw amino-acid sequence, 268 residues long: Speedy protein E4A (268 aa).

2 disordered regions span residues 1 to 26 and 43 to 97; these read MGEG…LGFV and LCSE…LDSE. Residues 43–52 show a composition bias toward polar residues; sequence LCSEEQSPQP. Residues 134-265 form a speedy/Ringo box; Required for CDK-binding region; sequence PEHHKVFTKL…DLWVWARDRT (132 aa).

The protein belongs to the Speedy/Ringo family. Interacts with CDK1. Does not interact with CDK2 in vivo. As to expression, testis-specific.

The protein localises to the nucleus. In terms of biological role, promotes progression through the cell cycle via binding and activation of CDK1. This chain is Speedy protein E4A, found in Mus musculus (Mouse).